Reading from the N-terminus, the 82-residue chain is Small ribosomal subunit protein bS18 (82 aa).

Belongs to the bacterial ribosomal protein bS18 family. As to quaternary structure, part of the 30S ribosomal subunit. Forms a tight heterodimer with protein bS6.

In terms of biological role, binds as a heterodimer with protein bS6 to the central domain of the 16S rRNA, where it helps stabilize the platform of the 30S subunit. This chain is Small ribosomal subunit protein bS18, found in Chlamydia caviae (strain ATCC VR-813 / DSM 19441 / 03DC25 / GPIC) (Chlamydophila caviae).